Consider the following 209-residue polypeptide: CASP-like protein 2A1 (209 aa).

Residues 1 to 38 (MSKMAEEKVLAAPATVDGGMQSSGDLQASSAAAARVRP) lie on the Cytoplasmic side of the membrane. A helical membrane pass occupies residues 39-59 (VETLLRAAPLGLCVAAMAIML). At 60-80 (RNSVTNEYGTVSYSDLGGFKY) the chain is on the extracellular side. Residues 81 to 101 (LVYANGLCAAYSLASAFYIAV) form a helical membrane-spanning segment. Over 102–109 (PRPATLSR) the chain is Cytoplasmic. Residues 110 to 130 (SWVVFLLDQVFTYLILAAGAA) traverse the membrane as a helical segment. Topologically, residues 131 to 163 (SAELLYLAYNGDKEVTWSEACGVFGGFCRQART) are extracellular. A helical transmembrane segment spans residues 164 to 184 (SVAITFASVACYILLSLISSY). Residues 185 to 209 (RLFSAYDPPQPSLGNKGVEIAAFPR) are Cytoplasmic-facing.

This sequence belongs to the Casparian strip membrane proteins (CASP) family. In terms of assembly, homodimer and heterodimers.

The protein localises to the cell membrane. This chain is CASP-like protein 2A1, found in Oryza sativa subsp. indica (Rice).